The chain runs to 89 residues: Large ribosomal subunit protein bL27 (89 aa).

Residues 1-20 are disordered; sequence MAHKKAGGSSRNGRDSAGRR.

It belongs to the bacterial ribosomal protein bL27 family.

This Jannaschia sp. (strain CCS1) protein is Large ribosomal subunit protein bL27.